The chain runs to 176 residues: RING-H2 finger protein ATL73 (176 aa).

The signal sequence occupies residues 1-16 (MARFLLATQATPTISA). A helical transmembrane segment spans residues 42–62 (VIILAALLCALICALGINSVL). The RING-type; atypical zinc-finger motif lies at 113-155 (CLICLGDFVEGETVRVLPKCNHGFHVKCIDTWLLSHSSCPTCR).

The protein belongs to the RING-type zinc finger family. ATL subfamily.

It is found in the membrane. The enzyme catalyses S-ubiquitinyl-[E2 ubiquitin-conjugating enzyme]-L-cysteine + [acceptor protein]-L-lysine = [E2 ubiquitin-conjugating enzyme]-L-cysteine + N(6)-ubiquitinyl-[acceptor protein]-L-lysine.. Its pathway is protein modification; protein ubiquitination. The chain is RING-H2 finger protein ATL73 (ATL73) from Arabidopsis thaliana (Mouse-ear cress).